The primary structure comprises 305 residues: Small ribosomal subunit protein bS1B (305 aa).

3 consecutive S1 motif domains span residues 29-98, 116-180, and 194-262; these read GQTV…LSRR, GKTL…LTQR, and GNIY…LSTR.

The protein belongs to the bacterial ribosomal protein bS1 family.

Binds mRNA. This chain is Small ribosomal subunit protein bS1B (rps1b), found in Synechocystis sp. (strain ATCC 27184 / PCC 6803 / Kazusa).